Reading from the N-terminus, the 188-residue chain is Elongation factor P (188 aa).

Lys-34 carries the post-translational modification N6-(3,6-diaminohexanoyl)-5-hydroxylysine.

This sequence belongs to the elongation factor P family. In terms of processing, is beta-lysylated on the epsilon-amino group of Lys-34 by the combined action of EpmA and EpmB, and then hydroxylated on the C5 position of the same residue by EpmC. Lysylation is critical for the stimulatory effect of EF-P on peptide-bond formation. The lysylation moiety would extend toward the peptidyltransferase center and stabilize the terminal 3-CCA end of the tRNA. The hydroxylation of the C5 position on Lys-34 would allow additional potential stabilizing hydrogen-bond interactions with the P-tRNA.

It is found in the cytoplasm. It functions in the pathway protein biosynthesis; polypeptide chain elongation. Its function is as follows. Involved in peptide bond synthesis. Alleviates ribosome stalling that occurs when 3 or more consecutive Pro residues or the sequence PPG is present in a protein, possibly by augmenting the peptidyl transferase activity of the ribosome. Modification of Lys-34 is required for alleviation. The sequence is that of Elongation factor P from Shigella boydii serotype 18 (strain CDC 3083-94 / BS512).